The chain runs to 229 residues: Cilia- and flagella-associated protein 95 (229 aa).

The Extracellular segment spans residues 1 to 123 (MDSLDRSCQD…LLNEETVSSG (123 aa)). N-linked (GlcNAc...) asparagine glycosylation is present at N75. A helical transmembrane segment spans residues 124–140 (IIERVTGLPATGFGAVF). Topologically, residues 141–229 (PRHPPDWSKM…PLTSGPIVPI (89 aa)) are cytoplasmic. A mn region spans residues 153–163 (LTTYSEDYVPP).

Microtubule inner protein component of sperm flagellar doublet microtubules. Interacts with MYH9. Interacts with MYH10. Expressed in undifferentiated embryonic stem cells. Expressed in airway epithelial cells.

The protein resides in the cytoplasm. The protein localises to the cytoskeleton. Its subcellular location is the cilium axoneme. It localises to the flagellum axoneme. It is found in the cell membrane. Functionally, microtubule inner protein (MIP) part of the dynein-decorated doublet microtubules (DMTs) in cilia axoneme, which is required for motile cilia beating. This chain is Cilia- and flagella-associated protein 95, found in Homo sapiens (Human).